The sequence spans 883 residues: DNA mismatch repair protein MutS (883 aa).

633–640 contacts ATP; sequence GPNMGGKS.

The protein belongs to the DNA mismatch repair MutS family.

This protein is involved in the repair of mismatches in DNA. It is possible that it carries out the mismatch recognition step. This protein has a weak ATPase activity. This Bordetella parapertussis (strain 12822 / ATCC BAA-587 / NCTC 13253) protein is DNA mismatch repair protein MutS.